The sequence spans 232 residues: Uracil phosphoribosyltransferase (232 aa).

38–42 (KGLVK) provides a ligand contact to GTP. Residues R87, R112, and 140–148 (DPMIATGST) contribute to the 5-phospho-alpha-D-ribose 1-diphosphate site. Uracil-binding positions include I204 and 209–211 (GDA). A 5-phospho-alpha-D-ribose 1-diphosphate-binding site is contributed by D210.

The protein belongs to the UPRTase family. Mg(2+) is required as a cofactor.

It carries out the reaction UMP + diphosphate = 5-phospho-alpha-D-ribose 1-diphosphate + uracil. The protein operates within pyrimidine metabolism; UMP biosynthesis via salvage pathway; UMP from uracil: step 1/1. Its activity is regulated as follows. Allosterically activated by GTP. In terms of biological role, catalyzes the conversion of uracil and 5-phospho-alpha-D-ribose 1-diphosphate (PRPP) to UMP and diphosphate. This chain is Uracil phosphoribosyltransferase, found in Pyrococcus furiosus (strain ATCC 43587 / DSM 3638 / JCM 8422 / Vc1).